Consider the following 336-residue polypeptide: Glucokinase (336 aa).

Position 12–17 (12–17 (ADIGGT)) interacts with ATP.

The protein belongs to the bacterial glucokinase family.

Its subcellular location is the cytoplasm. It catalyses the reaction D-glucose + ATP = D-glucose 6-phosphate + ADP + H(+). In Helicobacter pylori (strain P12), this protein is Glucokinase.